We begin with the raw amino-acid sequence, 259 residues long: Dihydroorotate dehydrogenase B (NAD(+)), electron transfer subunit (259 aa).

The FAD-binding FR-type domain maps to 2–102 (MQKQNMIVVN…LGPLGHGFPL (101 aa)). Residues 53 to 56 (RPIS), 70 to 72 (LYR), and 77 to 78 (GT) each bind FAD. Positions 221, 226, 229, and 246 each coordinate [2Fe-2S] cluster.

It belongs to the PyrK family. In terms of assembly, heterotetramer of 2 PyrK and 2 PyrD type B subunits. Requires [2Fe-2S] cluster as cofactor. It depends on FAD as a cofactor.

The protein operates within pyrimidine metabolism; UMP biosynthesis via de novo pathway; orotate from (S)-dihydroorotate (NAD(+) route): step 1/1. In terms of biological role, responsible for channeling the electrons from the oxidation of dihydroorotate from the FMN redox center in the PyrD type B subunit to the ultimate electron acceptor NAD(+). The chain is Dihydroorotate dehydrogenase B (NAD(+)), electron transfer subunit from Bacillus cereus (strain B4264).